The primary structure comprises 636 residues: MGKIIGIDLGTTNSCVAVMEGGQPTVIANQEGNRTTPSVVAFTKSGERLVGQVAKRQAITNPENTVFSIKRFMGRRYDEVNEEMKMVPYKVVRGENGDARVDIMGKKYSPPEISAMILTKLKEAAESYLGEKVTQAVITVPAYFNDAQRQATKDAGKIAGLDVLRIINEPTAAALAYGLDKKKNETIAVYDFGGGTFDISVLEVGEGVVEVKSTNGDTHLGGDNIDQRVIDWIVSEFKKENGIDLSKDQMALQRLKEAAEKAKMELSTLLETEINLPFITADATGPKHLQMRLSRSRFEQMVEDILQRSMGPCKQAMTDASVTPSQIDEVVLVGGQTRMPRIQTLVRELFQRDPHQGVNPDEVVAIGAAVQGGVLGGEVKDVLLLDVTPLSLGIETMGGVFTKLIERNTTIPTRKSEVFSTASDNQPSVEIKVYQGERAMARDNRLLGVFQLGNIPPAPRGVPQIEVTFDIDANGILNVTAKDRGTNNEQKITITSSSGLSKDEVEKMARDAEANAADDRKLKDTIDARNRADAMVYNVEKTLKEHRAKVGEAEAKEIEAALEETKKTLNENDAEKINAAVDRLTTASHKLAEAMYKSSSQPGAQEAPPTDGQPKPDEKGKDNVVDAEFVDVDDKK.

The residue at position 196 (Thr196) is a Phosphothreonine; by autocatalysis. The disordered stretch occupies residues 591–636; the sequence is LAEAMYKSSSQPGAQEAPPTDGQPKPDEKGKDNVVDAEFVDVDDKK. Basic and acidic residues predominate over residues 614–624; sequence PKPDEKGKDNV.

It belongs to the heat shock protein 70 family.

Functionally, acts as a chaperone. This Solibacter usitatus (strain Ellin6076) protein is Chaperone protein DnaK.